Reading from the N-terminus, the 150-residue chain is Large ribosomal subunit protein uL15 (150 aa).

The tract at residues 1 to 55 (MADNEILQMHDLKPAPGAKKDRTRVGRGEGSKGKTAGRGAKGQTKRNHVRPGFEG) is disordered. A compositionally biased stretch (basic and acidic residues) spans 8 to 32 (QMHDLKPAPGAKKDRTRVGRGEGSK).

It belongs to the universal ribosomal protein uL15 family. In terms of assembly, part of the 50S ribosomal subunit.

Binds to the 23S rRNA. This Bifidobacterium longum (strain DJO10A) protein is Large ribosomal subunit protein uL15.